Reading from the N-terminus, the 611-residue chain is Histone acetyltransferase KAT7 (611 aa).

The tract at residues 1-173 (MPRRKRNAGS…SDLSHRPKRR (173 aa)) is disordered. Phosphoserine is present on Ser10. Positions 42–57 (VTRSSARLSQSSQDSS) are enriched in low complexity. A phosphoserine; by ATR mark is found at Ser50 and Ser53. Residue Ser57 is modified to Phosphoserine; by PLK1. The residue at position 64 (Ser64) is a Phosphoserine. Phosphothreonine; by CDK1 occurs at positions 85 and 88. Residues 96 to 105 (QTRSSGSETE) show a composition bias toward polar residues. The residue at position 102 (Ser102) is a Phosphoserine. Thr104 is subject to Phosphothreonine. The segment covering 110 to 125 (FSDRETKNTADHDESP) has biased composition (basic and acidic residues). 2 positions are modified to phosphoserine: Ser111 and Ser124. A Phosphothreonine modification is found at Thr128. Over residues 134–145 (PSSESDIDISSP) the composition is skewed to low complexity. The span at 148-168 (SHDESIAKDMSLKDSGSDLSH) shows a compositional bias: basic and acidic residues. A phosphoserine mark is found at Ser158, Ser162, Ser164, and Ser178. The CCHHC-type zinc-finger motif lies at 176-219 (HESYNFNMKCPTPGCNSLGHLTGKHERHFSISGCPLYHNLSADE). An N6-acetyllysine mark is found at Lys199 and Lys277. Residue Lys323 forms a Glycyl lysine isopeptide (Lys-Gly) (interchain with G-Cter in SUMO2) linkage. Positions 332 to 607 (EGSNMIKTIA…MDPSCLKWTP (276 aa)) constitute an MYST-type HAT domain. Residue Lys338 forms a Glycyl lysine isopeptide (Lys-Gly) (interchain with G-Cter in ubiquitin) linkage. The segment at 365–390 (LYMCEFCLKYMKSQTILRRHMAKCVW) adopts a C2HC MYST-type zinc-finger fold. 4 residues coordinate Zn(2+): Cys368, Cys371, His384, and Cys388. At Lys432 the chain carries N6-acetyllysine; by autocatalysis. Acetyl-CoA contacts are provided by residues 475–477 (ILT) and 483–488 (RQGYGK). Ser506 bears the Phosphoserine mark. The active-site Proton donor/acceptor is Glu508. Acetyl-CoA is bound by residues Ser512 and Ser521.

The protein belongs to the MYST (SAS/MOZ) family. As to quaternary structure, component of the HBO1 complex composed of KAT7/HBO1, MEAF6, ING4 or ING5, and one scaffold subunit: complexes containing BRPF scaffold (BRPF1, BRD1/BRPF2 or BRPF3) direct KAT7/HBO1 specificity towards H3K14ac, while complexes containing JADE scaffold (JADE1, JADE2 and JADE3) mediate acetylation of histone H4. Interacts with MCM2 and ORC1. Interacts with the androgen receptor (AR); in the presence of dihydrotestosterone. Interacts with CDT1. Interacts with MAP2K1 and CUL1. Interacts with p53/TP53; leading to inhibit histone acetyltransferase activity. Interacts with MIS18BP1. Post-translationally, phosphorylated at Ser-50 and Ser-53 by ATR in response to DNA damage, promoting its ubiquitination by the CRL4(DDB2) complex and subsequent degradation. Phosphorylation at Ser-50 and Ser-53 by ATR in response to ultraviolet-induced DNA, promotes localization to DNA damage sites. Phosphorylation at Ser-57 by PLK1 during mitosis seems important for prereplicative complex formation and DNA replication licensing, and requires prior phosphorylation at Thr-85 and Thr-88 by CDK1. Phosphorylated by MAP2K1, which accelerates its degradation. In terms of processing, ubiquitinated at Lys-338, leading to proteasomal degradation. Ubiquitinated by the CRL4(DDB2) complex following phosphorylation by ATR, leading to its subsequent degradation. Autoacetylation at Lys-432 is required for proper function. Ubiquitously expressed, with highest levels in testis.

It localises to the nucleus. Its subcellular location is the chromosome. The protein localises to the centromere. It is found in the cytoplasm. The protein resides in the cytosol. The catalysed reaction is L-lysyl-[histone] + acetyl-CoA = N(6)-acetyl-L-lysyl-[histone] + CoA + H(+). Histone acetyltransferase activity is inhibited by GMNN in the context of a complex with CDT1, inhibiting histone H4 acetylation and DNA replication licensing. Selectively inhibited by WM-3835 (N'-(4-fluoro-5-methyl-[1,1'-biphenyl]-3-carbonyl)-3- hydroxybenzenesulfonohydrazide) inhibitor. Catalytic subunit of histone acetyltransferase HBO1 complexes, which specifically mediate acetylation of histone H3 at 'Lys-14' (H3K14ac), thereby regulating various processes, such as gene transcription, protein ubiquitination, immune regulation, stem cell pluripotent and self-renewal maintenance and embryonic development. Some complexes also catalyze acetylation of histone H4 at 'Lys-5', 'Lys-8' and 'Lys-12' (H4K5ac, H4K8ac and H4K12ac, respectively), regulating DNA replication initiation, regulating DNA replication initiation. Specificity of the HBO1 complexes is determined by the scaffold subunit: complexes containing BRPF scaffold (BRPF1, BRD1/BRPF2 or BRPF3) direct KAT7/HBO1 specificity towards H3K14ac, while complexes containing JADE (JADE1, JADE2 and JADE3) scaffold direct KAT7/HBO1 specificity towards histone H4. H3K14ac promotes transcriptional elongation by facilitating the processivity of RNA polymerase II. Acts as a key regulator of hematopoiesis by forming a complex with BRD1/BRPF2, directing KAT7/HBO1 specificity towards H3K14ac and promoting erythroid differentiation. H3K14ac is also required for T-cell development. KAT7/HBO1-mediated acetylation facilitates two consecutive steps, licensing and activation, in DNA replication initiation: H3K14ac facilitates the activation of replication origins, and histone H4 acetylation (H4K5ac, H4K8ac and H4K12ac) facilitates chromatin loading of MCM complexes, promoting DNA replication licensing. Acts as a positive regulator of centromeric CENPA assembly: recruited to centromeres and mediates histone acetylation, thereby preventing centromere inactivation mediated by SUV39H1, possibly by increasing histone turnover/exchange. Involved in nucleotide excision repair: phosphorylation by ATR in response to ultraviolet irradiation promotes its localization to DNA damage sites, where it mediates histone acetylation to facilitate recruitment of XPC at the damaged DNA sites. Acts as an inhibitor of NF-kappa-B independently of its histone acetyltransferase activity. Its function is as follows. Plays a central role in the maintenance of leukemia stem cells in acute myeloid leukemia (AML). Acts by mediating acetylation of histone H3 at 'Lys-14' (H3K14ac), thereby facilitating the processivity of RNA polymerase II to maintain the high expression of key genes, such as HOXA9 and HOXA10 that help to sustain the functional properties of leukemia stem cells. The protein is Histone acetyltransferase KAT7 of Homo sapiens (Human).